The following is a 445-amino-acid chain: Phosphoglucosamine mutase (445 aa).

Ser102 serves as the catalytic Phosphoserine intermediate. Mg(2+) is bound by residues Ser102, Asp241, Asp243, and Asp245. Ser102 is modified (phosphoserine).

It belongs to the phosphohexose mutase family. Mg(2+) is required as a cofactor. Activated by phosphorylation.

It catalyses the reaction alpha-D-glucosamine 1-phosphate = D-glucosamine 6-phosphate. Its function is as follows. Catalyzes the conversion of glucosamine-6-phosphate to glucosamine-1-phosphate. The sequence is that of Phosphoglucosamine mutase from Photorhabdus laumondii subsp. laumondii (strain DSM 15139 / CIP 105565 / TT01) (Photorhabdus luminescens subsp. laumondii).